An 821-amino-acid chain; its full sequence is Protein EFR3 homolog A (821 aa).

A phosphoserine mark is found at Ser360, Ser363, Ser422, and Ser694.

It belongs to the EFR3 family. Component of a phosphatidylinositol 4-kinase (PI4K) complex, composed of PI4KA, EFR3 (EFR3A or EFR3B), TTC7 (TTC7A or TTC7B) and HYCC (HYCC1 or HYCC2). In terms of processing, palmitoylated at its N-terminus, anchoring the protein to the plasma membrane.

Its subcellular location is the cell membrane. It localises to the cytoplasm. The protein localises to the cytosol. In terms of biological role, component of a complex required to localize phosphatidylinositol 4-kinase (PI4K) to the plasma membrane. The complex acts as a regulator of phosphatidylinositol 4-phosphate (PtdIns(4)P) synthesis. In the complex, EFR3A probably acts as the membrane-anchoring component. Also involved in responsiveness to G-protein-coupled receptors; it is however unclear whether this role is direct or indirect. The sequence is that of Protein EFR3 homolog A from Homo sapiens (Human).